The following is a 270-amino-acid chain: Large ribosomal subunit protein uL30 (270 aa).

Met-1 carries the post-translational modification N-acetylmethionine. 6 consecutive repeat copies span residues Lys-7–Leu-18, Lys-19–Leu-29, Lys-30–Leu-40, Lys-41–Val-52, Lys-53–Leu-64, and Arg-65–Ala-76. The 6 X 12 AA tandem repeats stretch occupies residues Lys-7–Ala-76. The residue at position 39 (Thr-39) is a Phosphothreonine. Lys-146 carries the N6-acetyllysine modification. At Lys-149 the chain carries N6-succinyllysine. The residue at position 161 (Tyr-161) is a Phosphotyrosine.

Belongs to the universal ribosomal protein uL30 family. In terms of assembly, component of the large ribosomal subunit. Homodimer. Interacts with DHX33.

The protein resides in the cytoplasm. In terms of biological role, component of the large ribosomal subunit. The ribosome is a large ribonucleoprotein complex responsible for the synthesis of proteins in the cell. Binds to G-rich structures in 28S rRNA and in mRNAs. Plays a regulatory role in the translation apparatus; inhibits cell-free translation of mRNAs. This chain is Large ribosomal subunit protein uL30 (Rpl7), found in Mus musculus (Mouse).